The primary structure comprises 408 residues: Serine/threonine transporter SstT (408 aa).

The next 9 helical transmembrane spans lie at 14–34 (GNLI…GIFS), 43–63 (IFGA…VFIL), 83–103 (IIFL…SISF), 143–163 (ALSS…GFAL), 181–201 (VLKI…GLVA), 219–239 (LIIL…LIVF), 247–269 (YPLI…SSAA), 290–310 (ISIP…IAIL), and 332–352 (VLAA…LLLI).

This sequence belongs to the dicarboxylate/amino acid:cation symporter (DAACS) (TC 2.A.23) family.

The protein resides in the cell inner membrane. The enzyme catalyses L-serine(in) + Na(+)(in) = L-serine(out) + Na(+)(out). It catalyses the reaction L-threonine(in) + Na(+)(in) = L-threonine(out) + Na(+)(out). Involved in the import of serine and threonine into the cell, with the concomitant import of sodium (symport system). The chain is Serine/threonine transporter SstT from Campylobacter lari (strain RM2100 / D67 / ATCC BAA-1060).